A 143-amino-acid chain; its full sequence is Meiotically up-regulated gene 128 protein (143 aa).

Has a role in meiosis. The polypeptide is Meiotically up-regulated gene 128 protein (mug128) (Schizosaccharomyces pombe (strain 972 / ATCC 24843) (Fission yeast)).